The following is a 325-amino-acid chain: WUSCHEL-related homeobox 8 (325 aa).

Positions 51 to 115 (DPKPRWNPKP…NRKSRAKHKL (65 aa)) form a DNA-binding region, homeobox; WUS-type.

It belongs to the WUS homeobox family. As to expression, expressed only in the egg cell. Not detected in the pollen tube. Expressed in the zygote, the basal cell, and later the suspensor. Expressed in all suspensor cells, except the hypophysis, and in the embryo surrounding region (ESR) endosperm cells. Strongly expressed in the suspensor cells, with a weak expression also detected throughout the developing embryo.

It is found in the nucleus. Probable transcription factor, which may be involved in embryonic patterning. May be required for basal embryo development after fertilization. Acts partially redundantly with STIP in promoting embryonic cell division and proliferation. Promotes cotyledon boundary formation by maintaining the symmetry in CUC genes expression domains. This is WUSCHEL-related homeobox 8 from Arabidopsis thaliana (Mouse-ear cress).